The following is a 338-amino-acid chain: H(2)-forming methylenetetrahydromethanopterin dehydrogenase-related protein MJ0715 (338 aa).

Belongs to the HMD family.

The protein is H(2)-forming methylenetetrahydromethanopterin dehydrogenase-related protein MJ0715 of Methanocaldococcus jannaschii (strain ATCC 43067 / DSM 2661 / JAL-1 / JCM 10045 / NBRC 100440) (Methanococcus jannaschii).